Consider the following 760-residue polypeptide: 5-methyltetrahydropteroyltriglutamate--homocysteine methyltransferase (760 aa).

5-methyltetrahydropteroyltri-L-glutamate is bound by residues 17–20 and Lys118; that span reads RELK. L-homocysteine-binding positions include 436–438 and Glu489; that span reads IGS. Residues 436-438 and Glu489 contribute to the L-methionine site; that span reads IGS. 5-methyltetrahydropteroyltri-L-glutamate contacts are provided by residues 520–521 and Trp566; that span reads RC. Asp604 lines the L-homocysteine pocket. Asp604 contributes to the L-methionine binding site. Glu610 contributes to the 5-methyltetrahydropteroyltri-L-glutamate binding site. Positions 646, 648, and 670 each coordinate Zn(2+). Residue His699 is the Proton donor of the active site. Cys731 is a binding site for Zn(2+).

This sequence belongs to the vitamin-B12 independent methionine synthase family. Zn(2+) serves as cofactor.

The enzyme catalyses 5-methyltetrahydropteroyltri-L-glutamate + L-homocysteine = tetrahydropteroyltri-L-glutamate + L-methionine. It participates in amino-acid biosynthesis; L-methionine biosynthesis via de novo pathway; L-methionine from L-homocysteine (MetE route): step 1/1. Its function is as follows. Catalyzes the transfer of a methyl group from 5-methyltetrahydrofolate to homocysteine resulting in methionine formation. The polypeptide is 5-methyltetrahydropteroyltriglutamate--homocysteine methyltransferase (Vibrio harveyi (Beneckea harveyi)).